The following is an 88-amino-acid chain: FAD assembly factor SdhE (88 aa).

Belongs to the SdhE FAD assembly factor family. As to quaternary structure, monomer. Makes weak or transient interactions with SdhA. Interacts with YgfX. Interacts with FrdA.

The protein resides in the cytoplasm. It participates in antibiotic biosynthesis; prodigiosin biosynthesis. An FAD assembly protein, which accelerates covalent attachment of the cofactor into other proteins. Plays an essential role in the assembly of succinate dehydrogenase (SDH, respiratory complex II), an enzyme complex that is a component of both the tricarboxylic acid cycle and the electron transport chain, and which couples the oxidation of succinate to fumarate with the reduction of ubiquinone (coenzyme Q) to ubiquinol. Required for flavinylation (covalent attachment of FAD) of the flavoprotein subunit SdhA of SDH. Required for flavinylation of the flavoprotein subunit FrdA of fumarate reductase (FRD). Flavinylation of SDH and FRD occurs in a similar but not identical manner, as site-specific mutations display subtle differences between them. Flavinylates SdhA in vivo in the absence of the other SDH subunits; SdhE mutants that do not flavinylate also interfere with wild-type activity in a possible dominant-negative fashion. Weakly binds to FAD and facilitates its binding to SdhA. Required for production of prodigiosin antibiotic (Pig); overproduction of SdhE in a deletion mutant leads to decreased synthesis of Pig compared to wild-type. Capable of flavinylating A.pasteurianus SdhA when the SDH operon and this gene are expressed in G.oxydans; flavinylation of SdhA is detected only in the presence of sdhE. This chain is FAD assembly factor SdhE, found in Serratia sp. (strain ATCC 39006) (Prodigiosinella confusarubida).